Here is a 246-residue protein sequence, read N- to C-terminus: NH(3)-dependent NAD(+) synthetase (246 aa).

An ATP-binding site is contributed by Gly-29–Ser-36. Residue Asp-35 participates in Mg(2+) binding. Arg-110 contributes to the deamido-NAD(+) binding site. Thr-130 contacts ATP. Glu-135 contributes to the Mg(2+) binding site. Residues Lys-159 and Ser-181 each contribute to the ATP site.

It belongs to the NAD synthetase family. As to quaternary structure, homodimer.

It catalyses the reaction deamido-NAD(+) + NH4(+) + ATP = AMP + diphosphate + NAD(+) + H(+). Its pathway is cofactor biosynthesis; NAD(+) biosynthesis; NAD(+) from deamido-NAD(+) (ammonia route): step 1/1. Its function is as follows. Catalyzes the ATP-dependent amidation of deamido-NAD to form NAD. Uses ammonia as a nitrogen source. The protein is NH(3)-dependent NAD(+) synthetase of Campylobacter jejuni subsp. jejuni serotype O:6 (strain 81116 / NCTC 11828).